The sequence spans 864 residues: Eukaryotic translation initiation factor 3 subunit C (864 aa).

Positions 1 to 77 are disordered; it reads MSRFFARGGS…EESEDEERVT (77 aa). A compositionally biased stretch (acidic residues) spans 14 to 54; that stretch reads SSSEDEQELYSDREEEEQFSDSEEESSEAESSEEESSDDEG. Positions 602-776 constitute a PCI domain; it reads FHMHINLELL…NAIVFRKGVE (175 aa). Positions 815 to 864 are disordered; the sequence is RDQGAGARGGRGAGRGGQARGGPRFPGGQQGRRPGGQQFSGGALGGAIKA. Residues 820–864 show a composition bias toward gly residues; sequence GARGGRGAGRGGQARGGPRFPGGQQGRRPGGQQFSGGALGGAIKA.

Belongs to the eIF-3 subunit C family. As to quaternary structure, component of the eukaryotic translation initiation factor 3 (eIF-3) complex.

The protein resides in the cytoplasm. In terms of biological role, component of the eukaryotic translation initiation factor 3 (eIF-3) complex, which is involved in protein synthesis of a specialized repertoire of mRNAs and, together with other initiation factors, stimulates binding of mRNA and methionyl-tRNAi to the 40S ribosome. The eIF-3 complex specifically targets and initiates translation of a subset of mRNAs involved in cell proliferation. The protein is Eukaryotic translation initiation factor 3 subunit C (nip1) of Aspergillus terreus (strain NIH 2624 / FGSC A1156).